We begin with the raw amino-acid sequence, 687 residues long: Protein SDA1 homolog (687 aa).

Disordered stretches follow at residues 517-549, 561-587, and 615-687; these read SSDE…SQMR, MKQL…EPQG, and TVIA…KSKI. Over residues 520–537 the composition is skewed to acidic residues; it reads EEQEDEDPSGENQEGEED. A compositionally biased stretch (basic residues) spans 644–666; that stretch reads EKRRKKNFMMMRHNKLVRGKTKR. A compositionally biased stretch (basic and acidic residues) spans 667–680; the sequence is SFRDKQIALRDSLL.

It belongs to the SDA1 family.

Its subcellular location is the nucleus. The protein resides in the nucleolus. Its function is as follows. Required for 60S pre-ribosomal subunits export to the cytoplasm. The protein is Protein SDA1 homolog (sdad1) of Nematostella vectensis (Starlet sea anemone).